A 324-amino-acid chain; its full sequence is DNA repair and recombination protein RadA (324 aa).

107–114 (GEFGSGKS) lines the ATP pocket.

The protein belongs to the eukaryotic RecA-like protein family.

Its function is as follows. Involved in DNA repair and in homologous recombination. Binds and assemble on single-stranded DNA to form a nucleoprotein filament. Hydrolyzes ATP in a ssDNA-dependent manner and promotes DNA strand exchange between homologous DNA molecules. The chain is DNA repair and recombination protein RadA from Methanoculleus marisnigri (strain ATCC 35101 / DSM 1498 / JR1).